A 311-amino-acid chain; its full sequence is Metal-staphylopine import system permease protein CntB (311 aa).

Helical transmembrane passes span 9–29, 105–125, 139–159, 173–193, 237–257, and 274–294; these read IALM…LTYI, LTII…VVSA, VAFF…IIYV, GPES…GIYF, IFCM…YIFA, and FPVI…FNTL. An ABC transmembrane type-1 domain is found at 99–295; the sequence is FMNTLKLTII…VLFIVFNTLA (197 aa).

This sequence belongs to the binding-protein-dependent transport system permease family. The complex is composed of two ATP-binding proteins (CntD and CntF), two transmembrane proteins (CntB and CntC) and a solute-binding protein (CntA).

The protein localises to the cell membrane. Part of the ABC transporter complex CntABCDF (Opp1) involved in the uptake of metal in complex with the metallophore staphylopine (StP). May be involved in the import of a large array of divalent metals ions such as nickel, cobalt, zinc, copper and iron. Probably responsible for the translocation of the substrate across the membrane. In Staphylococcus aureus (strain Mu50 / ATCC 700699), this protein is Metal-staphylopine import system permease protein CntB.